The chain runs to 619 residues: MPEYRSKTSTHGRNMAGARALWRATGVMETDFGKPIIAVANSFTQFVPGHVHLHNMGQLVAREIEKAGAIAKEFNTIAIDDGIAMGHSGMLYSLPSRDLIADSIEYMVNAHCADALVCISNCDKITPGMLIAAMRLNIPTIFVSGGPMEAGKVIGVANIQPERRLDLIDAMIESADDNISNRQVEEVEQNACPTCGSCSGMFTANSMNCLTEALGLSLPGNGSYLATHVGRKELFLEAGRMIVEITKRYYEQNDETVLPRSIATKKAFENAMTMDIAMGGSTNTILHLLAVANEAGVDFKMADIDRLSRVVPCICKTAPNNHDYYMEDVHRAGGIFAILKELDKAGKLHTDVHTIHAPTLKDAIEKWDVTNPENTHAIERFKAAPGGVRTTQAFSQNRMWKTLDLDREKGCIRDVAHAYSQDGGLAVLFGNIAERGCVVKTAGVDESILKFTGRARVFESQEDAVEGILGNQIVAGDIVIIRYEGPKGGPGMQEMLYPTSYLKSKGLGKACALLTDGRFSGGTSGLSIGHASPEAAEGGAIGLVHEGDTVEIDIPNRSIRLVISDEELAARRAEMEARGSKAWKPENRDRYVSAALRAYGAMATSADKGAVRDVAQIER.

Residue Asp-81 participates in Mg(2+) binding. Cys-122 contacts [2Fe-2S] cluster. Mg(2+)-binding residues include Asp-123 and Lys-124. Lys-124 is subject to N6-carboxylysine. Residue Cys-198 participates in [2Fe-2S] cluster binding. Glu-494 contributes to the Mg(2+) binding site. The Proton acceptor role is filled by Ser-520.

Belongs to the IlvD/Edd family. In terms of assembly, homodimer. [2Fe-2S] cluster is required as a cofactor. Requires Mg(2+) as cofactor.

The enzyme catalyses (2R)-2,3-dihydroxy-3-methylbutanoate = 3-methyl-2-oxobutanoate + H2O. It catalyses the reaction (2R,3R)-2,3-dihydroxy-3-methylpentanoate = (S)-3-methyl-2-oxopentanoate + H2O. It participates in amino-acid biosynthesis; L-isoleucine biosynthesis; L-isoleucine from 2-oxobutanoate: step 3/4. Its pathway is amino-acid biosynthesis; L-valine biosynthesis; L-valine from pyruvate: step 3/4. Its function is as follows. Functions in the biosynthesis of branched-chain amino acids. Catalyzes the dehydration of (2R,3R)-2,3-dihydroxy-3-methylpentanoate (2,3-dihydroxy-3-methylvalerate) into 2-oxo-3-methylpentanoate (2-oxo-3-methylvalerate) and of (2R)-2,3-dihydroxy-3-methylbutanoate (2,3-dihydroxyisovalerate) into 2-oxo-3-methylbutanoate (2-oxoisovalerate), the penultimate precursor to L-isoleucine and L-valine, respectively. This chain is Dihydroxy-acid dehydratase, found in Neisseria meningitidis serogroup A / serotype 4A (strain DSM 15465 / Z2491).